Consider the following 311-residue polypeptide: Methionyl-tRNA formyltransferase (311 aa).

112-115 lines the (6S)-5,6,7,8-tetrahydrofolate pocket; the sequence is SLLP.

Belongs to the Fmt family.

The catalysed reaction is L-methionyl-tRNA(fMet) + (6R)-10-formyltetrahydrofolate = N-formyl-L-methionyl-tRNA(fMet) + (6S)-5,6,7,8-tetrahydrofolate + H(+). In terms of biological role, attaches a formyl group to the free amino group of methionyl-tRNA(fMet). The formyl group appears to play a dual role in the initiator identity of N-formylmethionyl-tRNA by promoting its recognition by IF2 and preventing the misappropriation of this tRNA by the elongation apparatus. The sequence is that of Methionyl-tRNA formyltransferase from Sinorhizobium fredii (strain NBRC 101917 / NGR234).